A 408-amino-acid polypeptide reads, in one-letter code: DNA primase DnaG (408 aa).

The Toprim domain occupies 165–243 (PELIIVEGRA…KIDYVARAPT (79 aa)). The Mg(2+) site is built by glutamate 171, aspartate 216, and aspartate 218.

It belongs to the archaeal DnaG primase family. As to quaternary structure, forms a ternary complex with MCM helicase and DNA. Component of the archaeal exosome complex. The cofactor is Mg(2+).

The enzyme catalyses ssDNA + n NTP = ssDNA/pppN(pN)n-1 hybrid + (n-1) diphosphate.. In terms of biological role, RNA polymerase that catalyzes the synthesis of short RNA molecules used as primers for DNA polymerase during DNA replication. Also part of the exosome, which is a complex involved in RNA degradation. Acts as a poly(A)-binding protein that enhances the interaction between heteromeric, adenine-rich transcripts and the exosome. The sequence is that of DNA primase DnaG from Sulfurisphaera tokodaii (strain DSM 16993 / JCM 10545 / NBRC 100140 / 7) (Sulfolobus tokodaii).